The following is a 162-amino-acid chain: Nucleotide-binding protein ACIAD3137 (162 aa).

It belongs to the YajQ family.

Its function is as follows. Nucleotide-binding protein. This Acinetobacter baylyi (strain ATCC 33305 / BD413 / ADP1) protein is Nucleotide-binding protein ACIAD3137.